The following is a 224-amino-acid chain: MSSHPPIRSYVLRQGYFSNAQRHAYESLLPRYGIPLTEEPVDLDSIFGRTAPGILEIGSGMGETTAEIARQHPEKDFIAIEVHAPGIGSLLGQIEKHRLTNLRIIPHDAKLVLQQMFTSESLDGIHIFFPDPWPKARHHKRRLIQPDFVSLLCDRLKPGGYLHIATDWEDYATHILHVLRSEERFVNTAVDYAARPAYRPLTKFEQRGMKLGHTIRDIIFTRTA.

Residues glutamate 56, glutamate 81, aspartate 108, and aspartate 131 each contribute to the S-adenosyl-L-methionine site. Aspartate 131 is a catalytic residue. Substrate-binding positions include lysine 135, aspartate 167, and 202-205 (TKFE).

This sequence belongs to the class I-like SAM-binding methyltransferase superfamily. TrmB family.

It catalyses the reaction guanosine(46) in tRNA + S-adenosyl-L-methionine = N(7)-methylguanosine(46) in tRNA + S-adenosyl-L-homocysteine. The protein operates within tRNA modification; N(7)-methylguanine-tRNA biosynthesis. In terms of biological role, catalyzes the formation of N(7)-methylguanine at position 46 (m7G46) in tRNA. This Nitrosomonas europaea (strain ATCC 19718 / CIP 103999 / KCTC 2705 / NBRC 14298) protein is tRNA (guanine-N(7)-)-methyltransferase.